The following is a 597-amino-acid chain: NADPH-dependent diflavin oxidoreductase 1 (597 aa).

Positions L6 to W150 constitute a Flavodoxin-like domain. FMN contacts are provided by residues S12–A17, A59–G62, L97–N106, and D132. The disordered stretch occupies residues G188–K207. Positions S206–E447 constitute an FAD-binding FR-type domain. Residues R350, R382–S385, and G416–S419 each bind FAD. Residues T460, S515–R516, K521–Q525, and D558 each bind NADP(+). W596 lines the FAD pocket.

This sequence belongs to the NADPH-dependent diflavin oxidoreductase NDOR1 family. In the N-terminal section; belongs to the flavodoxin family. The protein in the C-terminal section; belongs to the flavoprotein pyridine nucleotide cytochrome reductase family. Interacts with CIAPIN1; as part of the cytosolic iron-sulfur (Fe-S) protein assembly (CIA) machinery. Interacts with DCPS. The cofactor is FAD. It depends on FMN as a cofactor. As to expression, low expression in brain, heart, kidney, pancreas, prostate and skeletal muscle. Highest levels in the placenta. Expressed in cancer cell lines including promyelocytic leukemia, HeLaS3, chronic myelagenous leukemia, lymphoblastic leukemia, Burkitt's lymphoma, colorectal adenocarcinoma, lung carcinoma, and melanoma G-361.

It localises to the cytoplasm. The protein resides in the perinuclear region. The catalysed reaction is 2 oxidized [2Fe-2S]-[protein] + NADPH = 2 reduced [2Fe-2S]-[protein] + NADP(+) + H(+). NADPH-dependent reductase which is a central component of the cytosolic iron-sulfur (Fe-S) protein assembly (CIA) machinery. Transfers electrons from NADPH via its FAD and FMN prosthetic groups to the [2Fe-2S] cluster of CIAPIN1, another key component of the CIA machinery. In turn, this reduced cluster provides electrons for assembly of cytosolic iron-sulfur cluster proteins. It can also reduce the [2Fe-2S] cluster of CISD1 and activate this protein implicated in Fe/S cluster repair. In vitro can fully activate methionine synthase/MTR in the presence of soluble cytochrome b5/CYB5A. The chain is NADPH-dependent diflavin oxidoreductase 1 from Homo sapiens (Human).